The primary structure comprises 511 residues: ATP synthase subunit alpha (511 aa).

169-176 (GDRKTGKT) is a binding site for ATP.

This sequence belongs to the ATPase alpha/beta chains family. F-type ATPases have 2 components, CF(1) - the catalytic core - and CF(0) - the membrane proton channel. CF(1) has five subunits: alpha(3), beta(3), gamma(1), delta(1), epsilon(1). CF(0) has three main subunits: a(1), b(2) and c(9-12). The alpha and beta chains form an alternating ring which encloses part of the gamma chain. CF(1) is attached to CF(0) by a central stalk formed by the gamma and epsilon chains, while a peripheral stalk is formed by the delta and b chains.

It localises to the cell membrane. It carries out the reaction ATP + H2O + 4 H(+)(in) = ADP + phosphate + 5 H(+)(out). In terms of biological role, produces ATP from ADP in the presence of a proton gradient across the membrane. The alpha chain is a regulatory subunit. This chain is ATP synthase subunit alpha, found in Latilactobacillus sakei subsp. sakei (strain 23K) (Lactobacillus sakei subsp. sakei).